Reading from the N-terminus, the 1787-residue chain is ATP-dependent RNA helicase DEAH11, chloroplastic (1787 aa).

Residues 1 to 33 (MRNSFPPSDGGRSTTDRRQQSFPSSSTNRYNSR) constitute a chloroplast transit peptide. A disordered region spans residues 1–75 (MRNSFPPSDG…DRAPSSGFSP (75 aa)). Over residues 20-60 (QSFPSSSTNRYNSRSAQSSPPLNHCTTWNQQHSQYHNTNFP) the composition is skewed to polar residues. Residues 313-477 (LKKIHCEQIM…LFDCGILHVN (165 aa)) form the Helicase ATP-binding domain. ATP is bound at residue 326–333 (GETGSGKS). Residues 424-427 (DEAH) carry the DEAH box motif. The Helicase C-terminal domain occupies 507 to 673 (DVVKMAVEIH…VALLRMLALG (167 aa)). Residues 1557-1764 (IELECPICLS…EPCYAHLRTI (208 aa)) form a TRIAD supradomain region. Positions 1561, 1564, 1577, 1579, 1582, 1585, 1604, 1609, 1649, 1654, 1672, 1675, 1680, 1683, 1688, 1693, 1719, and 1722 each coordinate Zn(2+). Residues 1561 to 1609 (CPICLSEVDDGYSLEGCSHLFCKACLLEQFEASMRNFDAFPILCSHIDC) form an RING-type 1 zinc finger. The IBR-type zinc finger occupies 1628 to 1693 (DELISASLSA…HLEYHPLITC (66 aa)). The RING-type 2; atypical zinc-finger motif lies at 1719-1747 (CPICKSTIEKTDGCNHLQCRCGKHICWTC). Cys-1732 is an active-site residue. The Zn(2+) site is built by Cys-1737 and Cys-1739.

It belongs to the DEAD box helicase family. DEAH subfamily.

Its subcellular location is the plastid. It is found in the chloroplast. It catalyses the reaction ATP + H2O = ADP + phosphate + H(+). The polypeptide is ATP-dependent RNA helicase DEAH11, chloroplastic (Arabidopsis thaliana (Mouse-ear cress)).